The primary structure comprises 566 residues: CTP synthase (566 aa).

An amidoligase domain region spans residues 1–282 (MSIKRAQLGG…DAYIIDQLGL (282 aa)). Ser23 lines the CTP pocket. Residue Ser23 participates in UTP binding. ATP-binding positions include 24 to 29 (SLGKGL) and Asp81. Mg(2+)-binding residues include Asp81 and Glu156. CTP is bound by residues 163-165 (DIE), 203-208 (KTKPTQ), and Lys239. Residues 203–208 (KTKPTQ) and Lys239 contribute to the UTP site. Residues 308-556 (TIGLVGKYID…IGAALDRQKA (249 aa)) form the Glutamine amidotransferase type-1 domain. Gly371 provides a ligand contact to L-glutamine. Catalysis depends on Cys398, which acts as the Nucleophile; for glutamine hydrolysis. Residues 399-402 (LGLQ), Glu422, and Arg482 each bind L-glutamine. Residues His529 and Glu531 contribute to the active site.

Belongs to the CTP synthase family. As to quaternary structure, homotetramer.

The enzyme catalyses UTP + L-glutamine + ATP + H2O = CTP + L-glutamate + ADP + phosphate + 2 H(+). It carries out the reaction L-glutamine + H2O = L-glutamate + NH4(+). The catalysed reaction is UTP + NH4(+) + ATP = CTP + ADP + phosphate + 2 H(+). It functions in the pathway pyrimidine metabolism; CTP biosynthesis via de novo pathway; CTP from UDP: step 2/2. Allosterically activated by GTP, when glutamine is the substrate; GTP has no effect on the reaction when ammonia is the substrate. The allosteric effector GTP functions by stabilizing the protein conformation that binds the tetrahedral intermediate(s) formed during glutamine hydrolysis. Inhibited by the product CTP, via allosteric rather than competitive inhibition. In terms of biological role, catalyzes the ATP-dependent amination of UTP to CTP with either L-glutamine or ammonia as the source of nitrogen. Regulates intracellular CTP levels through interactions with the four ribonucleotide triphosphates. This chain is CTP synthase, found in Leifsonia xyli subsp. xyli (strain CTCB07).